Here is a 189-residue protein sequence, read N- to C-terminus: Dual specificity phosphatase 29 (189 aa).

One can recognise a Tyrosine-protein phosphatase domain in the interval 33-182; it reads HVNEVWPGVY…LRELDTHLQE (150 aa). 126–133 provides a ligand contact to substrate; the sequence is HCVMGRSR. Cysteine 127 functions as the Phosphocysteine intermediate in the catalytic mechanism.

This sequence belongs to the protein-tyrosine phosphatase family. Non-receptor class dual specificity subfamily.

It is found in the cytoplasm. Its subcellular location is the nucleus. The enzyme catalyses O-phospho-L-tyrosyl-[protein] + H2O = L-tyrosyl-[protein] + phosphate. The catalysed reaction is O-phospho-L-seryl-[protein] + H2O = L-seryl-[protein] + phosphate. It carries out the reaction O-phospho-L-threonyl-[protein] + H2O = L-threonyl-[protein] + phosphate. In terms of biological role, dual specificity phosphatase able to dephosphorylate phosphotyrosine, phosphoserine and phosphothreonine residues within the same substrate, with a preference for phosphotyrosine as a substrate. Involved in the modulation of AMPK and MAPK1/2 signaling pathways. This Danio rerio (Zebrafish) protein is Dual specificity phosphatase 29 (dusp29).